Consider the following 414-residue polypeptide: Dothistromin biosynthesis peroxidase dotB (414 aa).

Residues 1–18 (MHFFSAIVLTCLASTAVA) form the signal peptide. Position 72 (Cys-72) interacts with heme. Residues Asn-187, Asn-241, and Asn-328 are each glycosylated (N-linked (GlcNAc...) asparagine).

Belongs to the chloroperoxidase family. Requires heme b as cofactor.

Its pathway is mycotoxin biosynthesis. In terms of biological role, peroxidase; part of the fragmented gene cluster that mediates the biosynthesis of dothistromin (DOTH), a polyketide toxin very similar in structure to the aflatoxin precursor, versicolorin B. The first step of the pathway is the conversion of acetate to norsolorinic acid (NOR) and requires the fatty acid synthase subunits hexA and hexB, as well as the polyketide synthase pksA. PksA combines a hexanoyl starter unit and 7 malonyl-CoA extender units to synthesize the precursor NOR. The hexanoyl starter unit is provided to the acyl-carrier protein (ACP) domain by the fungal fatty acid synthase hexA/hexB. The second step is the conversion of NOR to averantin (AVN) and requires the norsolorinic acid ketoreductase nor1, which catalyzes the dehydration of norsolorinic acid to form (1'S)-averantin. The cytochrome P450 monooxygenase avnA then catalyzes the hydroxylation of AVN to 5'hydroxyaverantin (HAVN). The next step is performed by adhA that transforms HAVN to averufin (AVF). Averufin might then be converted to hydroxyversicolorone by cypX and avfA. Hydroxyversicolorone is further converted versiconal hemiacetal acetate (VHA) by moxY. VHA is then the substrate for the versiconal hemiacetal acetate esterase est1 to yield versiconal (VAL). Versicolorin B synthase vbsA then converts VAL to versicolorin B (VERB) by closing the bisfuran ring. Then, the activity of the versicolorin B desaturase verB leads to versicolorin A (VERA). DotB, a predicted chloroperoxidase, may perform epoxidation of the A-ring of VERA. Alternatively, a cytochrome P450, such as cypX or avnA could catalyze this step. It is also possible that another, uncharacterized, cytochrome P450 enzyme is responsible for this step. Opening of the epoxide could potentially be achieved by the epoxide hydrolase epoA. However, epoA seems not to be required for DOTH biosynthesis, but other epoxide hydrolases may have the ability to complement this hydrolysis. Alternatively, opening of the epoxide ring could be achieved non-enzymatically. The next step is the deoxygenation of ring A to yield the 5,8-dihydroxyanthraquinone which is most likely catalyzed by the NADPH dehydrogenase encoded by ver1. The last stages of DOTH biosynthesis are proposed to involve hydroxylation of the bisfuran. OrdB and norB might have oxidative roles here. An alternative possibility is that cytochrome P450 monoogenases such as avnA and cypX might perform these steps in addition to previously proposed steps. The chain is Dothistromin biosynthesis peroxidase dotB from Dothistroma septosporum (Red band needle blight fungus).